Reading from the N-terminus, the 283-residue chain is Formamidopyrimidine-DNA glycosylase (283 aa).

Catalysis depends on proline 2, which acts as the Schiff-base intermediate with DNA. Residue glutamate 3 is the Proton donor of the active site. Lysine 58 serves as the catalytic Proton donor; for beta-elimination activity. DNA contacts are provided by histidine 100, arginine 119, and arginine 162. Residues 247 to 283 (RVYGREGLPCVTPGCSGTVGRIVQSGRSSFHCPLCQR) form an FPG-type zinc finger. Arginine 273 (proton donor; for delta-elimination activity) is an active-site residue.

It belongs to the FPG family. As to quaternary structure, monomer. The cofactor is Zn(2+).

The enzyme catalyses Hydrolysis of DNA containing ring-opened 7-methylguanine residues, releasing 2,6-diamino-4-hydroxy-5-(N-methyl)formamidopyrimidine.. The catalysed reaction is 2'-deoxyribonucleotide-(2'-deoxyribose 5'-phosphate)-2'-deoxyribonucleotide-DNA = a 3'-end 2'-deoxyribonucleotide-(2,3-dehydro-2,3-deoxyribose 5'-phosphate)-DNA + a 5'-end 5'-phospho-2'-deoxyribonucleoside-DNA + H(+). Its function is as follows. Involved in base excision repair of DNA damaged by oxidation or by mutagenic agents. Acts as a DNA glycosylase that recognizes and removes damaged bases. Has a preference for oxidized purines, such as 7,8-dihydro-8-oxoguanine (8-oxoG). Has AP (apurinic/apyrimidinic) lyase activity and introduces nicks in the DNA strand. Cleaves the DNA backbone by beta-delta elimination to generate a single-strand break at the site of the removed base with both 3'- and 5'-phosphates. The chain is Formamidopyrimidine-DNA glycosylase from Cereibacter sphaeroides (strain KD131 / KCTC 12085) (Rhodobacter sphaeroides).